The sequence spans 484 residues: PTS system N-acetylmuramic acid-specific EIIBC component (484 aa).

One can recognise a PTS EIIB type-1 domain in the interval 1-89; the sequence is MAKITTSMIQ…NEMMEGEEDN (89 aa). Cys-28 (phosphocysteine intermediate; for EIIB activity) is an active-site residue. A disordered region spans residues 83–106; it reads MEGEEDNSASTTAESRDLKDVASE. Residues 96–106 are compositionally biased toward basic and acidic residues; that stretch reads ESRDLKDVASE. The 361-residue stretch at 124-484 folds into the PTS EIIC type-1 domain; the sequence is SKFATIFTPL…FFGTKNVDLS (361 aa). The next 10 membrane-spanning stretches (helical) occupy residues 126 to 146, 168 to 188, 194 to 214, 232 to 252, 273 to 293, 312 to 332, 345 to 365, 379 to 399, 404 to 424, and 451 to 471; these read FATIFTPLIPGFIAAGLLLGF, LILYMKVFSKGLFSFLSILIG, AFGGSGVNGAILASLFVLGYN, GIDPRGNIIGVLIAAIIGAGV, TLLIMGAVTFVVIMPIGGVLF, ILAGLFLISVMFGIHQGFVPV, LFPILAMAGAGQVGAALALYA, GSIIPGFLGIGEPLIYGVTLP, FITACVGGAAGGFFIGLVSYM, and IFAGMLVFAAGLVISYVAGFL.

Its subcellular location is the cell inner membrane. It carries out the reaction N-acetyl-beta-D-muramate(out) + N(pros)-phospho-L-histidyl-[protein] = N-acetyl-beta-D-muramate 6-phosphate(in) + L-histidyl-[protein]. In terms of biological role, the phosphoenolpyruvate-dependent sugar phosphotransferase system (sugar PTS), a major carbohydrate active transport system, catalyzes the phosphorylation of incoming sugar substrates concomitantly with their translocation across the cell membrane. This system is involved in N-acetylmuramic acid (MurNAc) transport, yielding cytoplasmic MurNAc-6-P. Is also able to take up anhydro-N-acetylmuramic acid (anhMurNAc), but cannot phosphorylate the carbon 6, probably because of the 1,6-anhydro ring. The protein is PTS system N-acetylmuramic acid-specific EIIBC component (murP) of Aliivibrio fischeri (strain ATCC 700601 / ES114) (Vibrio fischeri).